A 103-amino-acid polypeptide reads, in one-letter code: Large ribosomal subunit protein bL21 (103 aa).

The protein belongs to the bacterial ribosomal protein bL21 family. In terms of assembly, part of the 50S ribosomal subunit. Contacts protein L20.

This protein binds to 23S rRNA in the presence of protein L20. The sequence is that of Large ribosomal subunit protein bL21 from Actinobacillus succinogenes (strain ATCC 55618 / DSM 22257 / CCUG 43843 / 130Z).